Consider the following 456-residue polypeptide: Choline kinase (456 aa).

It belongs to the choline/ethanolamine kinase family. As to quaternary structure, monomer. Mg(2+) is required as a cofactor.

The protein localises to the cytoplasm. It localises to the nucleus. The enzyme catalyses choline + ATP = phosphocholine + ADP + H(+). It functions in the pathway phospholipid metabolism; phosphatidylcholine biosynthesis; phosphocholine from choline: step 1/1. In terms of biological role, catalyzes the committed step in the synthesis of phosphatidylcholine by the CDP-choline pathway. In Schizosaccharomyces pombe (strain 972 / ATCC 24843) (Fission yeast), this protein is Choline kinase.